Reading from the N-terminus, the 883-residue chain is Receptor-like protein 40 (883 aa).

The N-terminal stretch at 1–21 (MSELLFSLNFLLLLLLSCVSP) is a signal peptide. Residues 22–846 (SSFFTFNNPV…EDEQVLNWKA (825 aa)) lie on the Extracellular side of the membrane. N-linked (GlcNAc...) asparagine glycans are attached at residues asparagine 58, asparagine 91, and asparagine 109. LRR repeat units follow at residues 97 to 121 (FHHLRSLLLPHNNFTSSSISSKFGM) and 122 to 143 (LNNLEVLSLSSSGFLAQVPFSF). N-linked (GlcNAc...) asparagine glycosylation is present at asparagine 145. LRR repeat units lie at residues 146–169 (LSMLSALVLSNNDLTGSLSFARNL), 170–195 (RKLRVLDVSYNHFSGILNPNSSLFEL), 197–219 (HIIYLNLRYNNFTSSSLPYEFGN), 220–244 (LNKLEVLDVSSNSFFGQVPPTISNL), 246–267 (QLTELYLPLNHFTGSLPLVQNL), 268–291 (TKLSILHLFGNHFSGTIPSSLFTM), 293–316 (FLSYLSLKGNNLNGSIEVPNSSSS), 317–340 (SRLESLHLGENHFEGKILEPISKL), 342–364 (NLKELDLSFLNTSYPIDLSLFSS), 365–390 (LKSLLLLDLSGDWISKASLTLDSYIP), 391–412 (STLEVLRLEHCDISDFPNVFKT), 413–437 (LHNLEYIALSNNRISGKFPEWLWSL), 439–462 (RLSSVFITDNLLTGFEGSSEVLVN), and 463–486 (SSVQILSLDTNSLEGALPHLPLSI). 4 N-linked (GlcNAc...) asparagine glycosylation sites follow: asparagine 189, asparagine 207, asparagine 243, and asparagine 266. N-linked (GlcNAc...) asparagine glycans are attached at residues asparagine 305 and asparagine 312. A glycan (N-linked (GlcNAc...) asparagine) is linked at asparagine 352. N-linked (GlcNAc...) asparagine glycosylation occurs at asparagine 462. Residues 487-506 (NYFSAIDNRFGGDIPLSICN) form an LRR 17; degenerate repeat. N-linked (GlcNAc...) asparagine glycans are attached at residues asparagine 506 and asparagine 519. LRR repeat units follow at residues 507–528 (RSSLDVLDLSYNNFTGPIPPCL), 529–552 (SNLLYLKLRKNNLEGSIPDKYYED), 554–576 (PLRSLDVGYNRLTGKLPRSLINC), 578–600 (ALQFLSVDHNGIKDTFPFSLKAL), 601–624 (PKLQVLLLSSNKFYGPLSPPNEGP), 627–651 (FPELRILEIAGNKLTGSLSSDFFVN), 701–724 (TSSATIDFSGNRLEGEIPESIGLL), 725–747 (KALIALNLSNNAFTGHIPLSFAN), 748–772 (LKKMESLDLSSNQLSGTIPNGLRTL), and 774–797 (FLAYVNVSHNQLIGEIPQGTQITG). Residue asparagine 575 is glycosylated (N-linked (GlcNAc...) asparagine). An N-linked (GlcNAc...) asparagine glycan is attached at asparagine 731. A glycan (N-linked (GlcNAc...) asparagine) is linked at asparagine 779. A helical transmembrane segment spans residues 847–867 (VAIGYGIGVLLGLAIAQLISL). Residues 868–883 (YKPKWLASLVIKSRNC) lie on the Cytoplasmic side of the membrane.

It belongs to the RLP family.

The protein localises to the cell membrane. The polypeptide is Receptor-like protein 40 (Arabidopsis thaliana (Mouse-ear cress)).